The primary structure comprises 164 residues: UPF0304 protein NT01EI_2691 (164 aa).

The protein belongs to the UPF0304 family.

The chain is UPF0304 protein NT01EI_2691 from Edwardsiella ictaluri (strain 93-146).